The primary structure comprises 238 residues: 1-(5-phosphoribosyl)-5-[(5-phosphoribosylamino)methylideneamino] imidazole-4-carboxamide isomerase (238 aa).

Residue D8 is the Proton acceptor of the active site. Residue D130 is the Proton donor of the active site.

Belongs to the HisA/HisF family.

The protein resides in the cytoplasm. The catalysed reaction is 1-(5-phospho-beta-D-ribosyl)-5-[(5-phospho-beta-D-ribosylamino)methylideneamino]imidazole-4-carboxamide = 5-[(5-phospho-1-deoxy-D-ribulos-1-ylimino)methylamino]-1-(5-phospho-beta-D-ribosyl)imidazole-4-carboxamide. It functions in the pathway amino-acid biosynthesis; L-histidine biosynthesis; L-histidine from 5-phospho-alpha-D-ribose 1-diphosphate: step 4/9. This chain is 1-(5-phosphoribosyl)-5-[(5-phosphoribosylamino)methylideneamino] imidazole-4-carboxamide isomerase, found in Methanococcus maripaludis (strain C5 / ATCC BAA-1333).